Here is a 370-residue protein sequence, read N- to C-terminus: tRNA-specific 2-thiouridylase MnmA (370 aa).

ATP is bound by residues 11 to 18 (AMSGGVDS) and Met-37. The interval 99–101 (NPD) is interaction with target base in tRNA. Catalysis depends on Cys-104, which acts as the Nucleophile. A disulfide bridge connects residues Cys-104 and Cys-201. An ATP-binding site is contributed by Gly-129. The segment at 151-153 (KDQ) is interaction with tRNA. Cys-201 acts as the Cysteine persulfide intermediate in catalysis. Residues 313–314 (RY) form an interaction with tRNA region.

The protein belongs to the MnmA/TRMU family. As to quaternary structure, interacts with TusE.

It localises to the cytoplasm. The enzyme catalyses S-sulfanyl-L-cysteinyl-[protein] + uridine(34) in tRNA + AH2 + ATP = 2-thiouridine(34) in tRNA + L-cysteinyl-[protein] + A + AMP + diphosphate + H(+). In terms of biological role, catalyzes the 2-thiolation of uridine at the wobble position (U34) of tRNA(Lys), tRNA(Glu) and tRNA(Gln), leading to the formation of s(2)U34, the first step of tRNA-mnm(5)s(2)U34 synthesis. Sulfur is provided by IscS, via a sulfur-relay system. Binds ATP and its substrate tRNAs. The sequence is that of tRNA-specific 2-thiouridylase MnmA from Buchnera aphidicola subsp. Baizongia pistaciae (strain Bp).